The chain runs to 169 residues: S-ribosylhomocysteine lyase (169 aa).

H54, H58, and C128 together coordinate Fe cation.

Belongs to the LuxS family. In terms of assembly, homodimer. Fe cation is required as a cofactor.

The enzyme catalyses S-(5-deoxy-D-ribos-5-yl)-L-homocysteine = (S)-4,5-dihydroxypentane-2,3-dione + L-homocysteine. Involved in the synthesis of autoinducer 2 (AI-2) which is secreted by bacteria and is used to communicate both the cell density and the metabolic potential of the environment. The regulation of gene expression in response to changes in cell density is called quorum sensing. Catalyzes the transformation of S-ribosylhomocysteine (RHC) to homocysteine (HC) and 4,5-dihydroxy-2,3-pentadione (DPD). This Shewanella sp. (strain ANA-3) protein is S-ribosylhomocysteine lyase.